A 259-amino-acid polypeptide reads, in one-letter code: MAPKSKKVAPSPFAQPKAAKTTKNPLFVSRPRSFGIGQDIQPKRDLSRFVKWPEYIRLQRRRKILNLRLKVPPAIAQFQKTLDKNTATQVFKLLNKYRPETAAEKKQRLVAEAEAVANGKSAQDVSKKPYNVKYGLNHVVALIEAKKAKLVLIASDVDPIELVVFLPALCKKMGVPYAIVKNKARLGTVIHQKTAAVLAVTEVREEDKNELASIVSAVDANFSAKYDESRRKWGGGIMGGKTQALLAKRAKAAAATVRL.

A disordered region spans residues 1 to 24; it reads MAPKSKKVAPSPFAQPKAAKTTKN. Ser11 and Ser33 each carry phosphoserine.

This sequence belongs to the eukaryotic ribosomal protein eL8 family. In terms of assembly, component of the large ribosomal subunit (LSU). Mature yeast ribosomes consist of a small (40S) and a large (60S) subunit. The 40S small subunit contains 1 molecule of ribosomal RNA (18S rRNA) and at least 33 different proteins. The large 60S subunit contains 3 rRNA molecules (25S, 5.8S and 5S rRNA) and at least 46 different proteins.

Its subcellular location is the cytoplasm. Functionally, component of the ribosome, a large ribonucleoprotein complex responsible for the synthesis of proteins in the cell. The small ribosomal subunit (SSU) binds messenger RNAs (mRNAs) and translates the encoded message by selecting cognate aminoacyl-transfer RNA (tRNA) molecules. The large subunit (LSU) contains the ribosomal catalytic site termed the peptidyl transferase center (PTC), which catalyzes the formation of peptide bonds, thereby polymerizing the amino acids delivered by tRNAs into a polypeptide chain. The nascent polypeptides leave the ribosome through a tunnel in the LSU and interact with protein factors that function in enzymatic processing, targeting, and the membrane insertion of nascent chains at the exit of the ribosomal tunnel. In Schizosaccharomyces pombe (strain 972 / ATCC 24843) (Fission yeast), this protein is Large ribosomal subunit protein eL8 (rpl8).